Consider the following 131-residue polypeptide: Arsenate reductase (131 aa).

Active-site nucleophile residues include Cys10, Cys82, and Cys89. 2 disulfides stabilise this stretch: Cys10–Cys82 and Cys82–Cys89.

It belongs to the low molecular weight phosphotyrosine protein phosphatase family. Thioredoxin-coupled ArsC subfamily.

The protein resides in the cytoplasm. The catalysed reaction is arsenate + [thioredoxin]-dithiol + H(+) = arsenite + [thioredoxin]-disulfide + H2O. Functionally, catalyzes the reduction of arsenate [As(V)] to arsenite [As(III)]. The polypeptide is Arsenate reductase (Staphylococcus aureus (strain COL)).